The chain runs to 216 residues: Redox-sensing transcriptional repressor Rex (216 aa).

Positions 20 to 59 form a DNA-binding region, H-T-H motif; it reads QYYRLFKSLVEENVTRTNSQLISEKIGVDAATIRRDFSLF. 94-99 serves as a coordination point for NAD(+); it reads GVGNLG.

It belongs to the transcriptional regulatory Rex family. In terms of assembly, homodimer.

It is found in the cytoplasm. Functionally, modulates transcription in response to changes in cellular NADH/NAD(+) redox state. The protein is Redox-sensing transcriptional repressor Rex of Lactococcus lactis subsp. cremoris (Streptococcus cremoris).